A 987-amino-acid polypeptide reads, in one-letter code: Ras guanine nucleotide exchange factor efc25 (987 aa).

Residues 1–10 (MRRPNLDRLR) are compositionally biased toward basic and acidic residues. Disordered regions lie at residues 1–50 (MRRP…STMS), 100–130 (FSST…PEIR), and 529–552 (NANT…ISRS). Positions 19–39 (TSVSKPSTPSYSTYSLSPTFS) are enriched in low complexity. 3 stretches are compositionally biased toward polar residues: residues 40-50 (DKSVLSPSTMS), 102-111 (STHSLTRQPS), and 540-552 (RQTN…ISRS). At Ser552 the chain carries Phosphoserine. In terms of domain architecture, N-terminal Ras-GEF spans 590 to 723 (SDNNVKGGTL…VILSEIDNLW (134 aa)). The Ras-GEF domain maps to 752-985 (TPEEFASQMT…FDKSLSLEPR (234 aa)).

It is found in the cytoplasm. Functionally, has a role in chromosome segregation and cell morphology upstream of the ras1-scd1 pathway. Promotes the exchange of ras1-bound GDP by GTP leading to its activation. This is Ras guanine nucleotide exchange factor efc25 (efc25) from Schizosaccharomyces pombe (strain 972 / ATCC 24843) (Fission yeast).